A 412-amino-acid chain; its full sequence is MVFRTGSGVAGRGPELRLYDTSDRQVRPVSAAVAPTCKATMYVCGITPYDATHLGHAATYLAFDLIHRLWLDLGHEVHYVQNVTDVDDPLFERADRNGVDWRDLAEREVALFRDDMASLRILPPHDYVAATETIVEIVELVDKMLVSGAAYVIDDEYPDIYFRADATLQFGYESGYDRDTMLRLYEQSGGDPRRPGKNGELDALLWRAARPGEPSWSSPFGPGRPGWHVECAAIALSRIGIGLDIQGGGSDLIFPHHEFTAAHAECVRGERRFARHYVHAGMIGWDEHKMSKSRGNLVLVSTLRAQGAPPSAIRLGLLAGHYRADRFWSSQLLDDAIARLHRWRTAASMPAGPDVADVIARVRGYLADDLDTPKAIAALDGWVTDALEYGGHDAAAPKLLATAIDALLGVDL.

Position 44 (C44) interacts with Zn(2+). L-cysteinyl-5'-AMP contacts are provided by residues 44-47, T59, and 82-84; these read CGIT and NVT. The 'HIGH' region signature appears at 46 to 56; that stretch reads ITPYDATHLGH. The short motif at 187–192 is the 'ERGGDP' region element; sequence QSGGDP. Residue W227 coordinates L-cysteinyl-5'-AMP. C231 is a Zn(2+) binding site. 249 to 251 contacts L-cysteinyl-5'-AMP; that stretch reads GSD. H256 lines the Zn(2+) pocket. I283 provides a ligand contact to L-cysteinyl-5'-AMP. The 'KMSKS' region motif lies at 289–293; the sequence is KMSKS.

It belongs to the class-I aminoacyl-tRNA synthetase family. MshC subfamily. As to quaternary structure, monomer. The cofactor is Zn(2+).

It catalyses the reaction 1D-myo-inositol 2-amino-2-deoxy-alpha-D-glucopyranoside + L-cysteine + ATP = 1D-myo-inositol 2-(L-cysteinylamino)-2-deoxy-alpha-D-glucopyranoside + AMP + diphosphate + H(+). Catalyzes the ATP-dependent condensation of GlcN-Ins and L-cysteine to form L-Cys-GlcN-Ins. The sequence is that of L-cysteine:1D-myo-inositol 2-amino-2-deoxy-alpha-D-glucopyranoside ligase (mshC) from Mycobacterium leprae (strain TN).